A 310-amino-acid polypeptide reads, in one-letter code: Malate dehydrogenase (310 aa).

Residues 7–13 and Asp34 contribute to the NAD(+) site; that span reads GAAGGIG. Arg81 and Arg87 together coordinate substrate. Residues Asn94 and 117–119 each bind NAD(+); that span reads ITN. Asn119 and Arg153 together coordinate substrate. His177 serves as the catalytic Proton acceptor. Met227 contributes to the NAD(+) binding site.

This sequence belongs to the LDH/MDH superfamily. MDH type 1 family. Homodimer.

The enzyme catalyses (S)-malate + NAD(+) = oxaloacetate + NADH + H(+). Functionally, catalyzes the reversible oxidation of malate to oxaloacetate. The protein is Malate dehydrogenase of Pseudoalteromonas translucida (strain TAC 125).